A 269-amino-acid chain; its full sequence is ATP synthase subunit delta (269 aa).

Belongs to the ATPase delta chain family. F-type ATPases have 2 components, F(1) - the catalytic core - and F(0) - the membrane proton channel. F(1) has five subunits: alpha(3), beta(3), gamma(1), delta(1), epsilon(1). F(0) has three main subunits: a(1), b(2) and c(10-14). The alpha and beta chains form an alternating ring which encloses part of the gamma chain. F(1) is attached to F(0) by a central stalk formed by the gamma and epsilon chains, while a peripheral stalk is formed by the delta and b chains.

Its subcellular location is the cell membrane. F(1)F(0) ATP synthase produces ATP from ADP in the presence of a proton or sodium gradient. F-type ATPases consist of two structural domains, F(1) containing the extramembraneous catalytic core and F(0) containing the membrane proton channel, linked together by a central stalk and a peripheral stalk. During catalysis, ATP synthesis in the catalytic domain of F(1) is coupled via a rotary mechanism of the central stalk subunits to proton translocation. Its function is as follows. This protein is part of the stalk that links CF(0) to CF(1). It either transmits conformational changes from CF(0) to CF(1) or is implicated in proton conduction. In Thermobifida fusca (strain YX), this protein is ATP synthase subunit delta.